Reading from the N-terminus, the 339-residue chain is Ketol-acid reductoisomerase (NADP(+)) (339 aa).

Residues 1-182 (MRVYYDRDAD…GGGRAGIIET (182 aa)) enclose the KARI N-terminal Rossmann domain. Residues 24–27 (YGSQ), Arg-48, Ser-51, Ser-53, and 83–86 (DELQ) contribute to the NADP(+) site. His-108 is an active-site residue. Position 134 (Gly-134) interacts with NADP(+). Residues 183-328 (TFREECETDL…AKLRDMMPWI (146 aa)) enclose the KARI C-terminal knotted domain. 4 residues coordinate Mg(2+): Asp-191, Glu-195, Glu-227, and Glu-231. Ser-252 is a binding site for substrate.

Belongs to the ketol-acid reductoisomerase family. It depends on Mg(2+) as a cofactor.

It catalyses the reaction (2R)-2,3-dihydroxy-3-methylbutanoate + NADP(+) = (2S)-2-acetolactate + NADPH + H(+). The catalysed reaction is (2R,3R)-2,3-dihydroxy-3-methylpentanoate + NADP(+) = (S)-2-ethyl-2-hydroxy-3-oxobutanoate + NADPH + H(+). The protein operates within amino-acid biosynthesis; L-isoleucine biosynthesis; L-isoleucine from 2-oxobutanoate: step 2/4. Its pathway is amino-acid biosynthesis; L-valine biosynthesis; L-valine from pyruvate: step 2/4. Involved in the biosynthesis of branched-chain amino acids (BCAA). Catalyzes an alkyl-migration followed by a ketol-acid reduction of (S)-2-acetolactate (S2AL) to yield (R)-2,3-dihydroxy-isovalerate. In the isomerase reaction, S2AL is rearranged via a Mg-dependent methyl migration to produce 3-hydroxy-3-methyl-2-ketobutyrate (HMKB). In the reductase reaction, this 2-ketoacid undergoes a metal-dependent reduction by NADPH to yield (R)-2,3-dihydroxy-isovalerate. The sequence is that of Ketol-acid reductoisomerase (NADP(+)) from Rhodopseudomonas palustris (strain ATCC BAA-98 / CGA009).